The following is a 311-amino-acid chain: tRNA-cytidine(32) 2-sulfurtransferase (311 aa).

Residues 18–38 form a disordered region; sequence KVGADHGPSEENGSSHPLFDN. The PP-loop motif signature appears at 77–82; the sequence is SGGKDS. [4Fe-4S] cluster is bound by residues Cys-152, Cys-155, and Cys-243.

The protein belongs to the TtcA family. As to quaternary structure, homodimer. Mg(2+) serves as cofactor. The cofactor is [4Fe-4S] cluster.

Its subcellular location is the cytoplasm. It carries out the reaction cytidine(32) in tRNA + S-sulfanyl-L-cysteinyl-[cysteine desulfurase] + AH2 + ATP = 2-thiocytidine(32) in tRNA + L-cysteinyl-[cysteine desulfurase] + A + AMP + diphosphate + H(+). The protein operates within tRNA modification. Functionally, catalyzes the ATP-dependent 2-thiolation of cytidine in position 32 of tRNA, to form 2-thiocytidine (s(2)C32). The sulfur atoms are provided by the cysteine/cysteine desulfurase (IscS) system. The chain is tRNA-cytidine(32) 2-sulfurtransferase from Agrobacterium fabrum (strain C58 / ATCC 33970) (Agrobacterium tumefaciens (strain C58)).